A 204-amino-acid polypeptide reads, in one-letter code: DNA-binding transcriptional activator EvgA (204 aa).

In terms of domain architecture, Response regulatory spans 2-117 (NAIIIDDHPL…NIIAAIEAAK (116 aa)). The residue at position 52 (aspartate 52) is a 4-aspartylphosphate. In terms of domain architecture, HTH luxR-type spans 137–202 (DQQKLDSLSK…DLYTFAQRNK (66 aa)). The H-T-H motif DNA-binding region spans 161-180 (NNDIAEKMFISNKTVSTYKS).

As to quaternary structure, homodimer. Phosphorylated by EvgS.

It is found in the cytoplasm. Its function is as follows. Member of the two-component regulatory system EvgS/EvgA. Regulates the expression of emrKY operon and yfdX. Also seems to control expression of at least one other multidrug efflux operon. This chain is DNA-binding transcriptional activator EvgA (evgA), found in Escherichia coli O157:H7.